The chain runs to 491 residues: Ketol-acid reductoisomerase (NADP(+)) (491 aa).

Residues 17–208 (LGKCRFMSRD…GGHRAGVLES (192 aa)) form the KARI N-terminal Rossmann domain. NADP(+)-binding positions include 45–48 (CGAQ), Arg68, Arg76, Ser78, and 108–110 (DKQ). His132 is a catalytic residue. Gly158 is a binding site for NADP(+). KARI C-terminal knotted domains are found at residues 209–344 (SFVA…NYPE) and 345–484 (YEGK…MTDM). Residues Asp217, Glu221, Glu389, and Glu393 each coordinate Mg(2+). Substrate is bound at residue Ser414.

The protein belongs to the ketol-acid reductoisomerase family. Requires Mg(2+) as cofactor.

The enzyme catalyses (2R)-2,3-dihydroxy-3-methylbutanoate + NADP(+) = (2S)-2-acetolactate + NADPH + H(+). The catalysed reaction is (2R,3R)-2,3-dihydroxy-3-methylpentanoate + NADP(+) = (S)-2-ethyl-2-hydroxy-3-oxobutanoate + NADPH + H(+). The protein operates within amino-acid biosynthesis; L-isoleucine biosynthesis; L-isoleucine from 2-oxobutanoate: step 2/4. It participates in amino-acid biosynthesis; L-valine biosynthesis; L-valine from pyruvate: step 2/4. Its function is as follows. Involved in the biosynthesis of branched-chain amino acids (BCAA). Catalyzes an alkyl-migration followed by a ketol-acid reduction of (S)-2-acetolactate (S2AL) to yield (R)-2,3-dihydroxy-isovalerate. In the isomerase reaction, S2AL is rearranged via a Mg-dependent methyl migration to produce 3-hydroxy-3-methyl-2-ketobutyrate (HMKB). In the reductase reaction, this 2-ketoacid undergoes a metal-dependent reduction by NADPH to yield (R)-2,3-dihydroxy-isovalerate. In Proteus mirabilis (strain HI4320), this protein is Ketol-acid reductoisomerase (NADP(+)).